A 290-amino-acid chain; its full sequence is L-cysteine S-thiosulfotransferase subunit SoxA (290 aa).

Positions 1 to 26 are cleaved as a signal peptide; sequence MPRFTKTKGTLAATALGLALAGAAFA. Residues aspartate 78 and aspartate 81 each coordinate Zn(2+). One can recognise a Cytochrome c domain in the interval 78–171; sequence DDFDNPAMVF…DMLSLISLQS (94 aa). Heme c contacts are provided by cysteine 106, cysteine 109, histidine 110, and cysteine 143. Position 190 (histidine 190) interacts with Zn(2+). Heme c contacts are provided by cysteine 206, cysteine 209, and histidine 210. Arginine 247 serves as a coordination point for substrate. Cysteine 251 lines the heme c pocket. Cysteine 251 (cysteine persulfide intermediate) is an active-site residue. A Zn(2+)-binding site is contributed by aspartate 266.

The protein belongs to the SoxA family. As to quaternary structure, heterodimer of SoxA and SoxX. It depends on heme c as a cofactor. Zn(2+) serves as cofactor. Cysteine persulfide at Cys-251.

Its subcellular location is the periplasm. It catalyses the reaction L-cysteinyl-[SoxY protein] + thiosulfate + 2 Fe(III)-[cytochrome c] = S-sulfosulfanyl-L-cysteinyl-[SoxY protein] + 2 Fe(II)-[cytochrome c] + 2 H(+). The enzyme catalyses S-sulfanyl-L-cysteinyl-[SoxY protein] + thiosulfate + 2 Fe(III)-[cytochrome c] = S-(2-sulfodisulfanyl)-L-cysteinyl-[SoxY protein] + 2 Fe(II)-[cytochrome c] + 2 H(+). Functionally, C-type diheme cytochrome, which is part of the SoxAX cytochrome complex involved in sulfur oxidation. The SoxAX complex catalyzes the formation of a heterodisulfide bond between the conserved cysteine residue on a sulfur carrier SoxYZ complex subunit SoxY and thiosulfate or other inorganic sulfur substrates. This leads to the liberation of two electrons, which may be transferred from the SoxAX complex to another cytochrome c that then channels them into the respiratory electron transport chain. Some electrons may be used for reductive CO(2) fixation. The sequence is that of L-cysteine S-thiosulfotransferase subunit SoxA from Paracoccus pantotrophus (Thiosphaera pantotropha).